The chain runs to 239 residues: Ribitol-5-phosphate cytidylyltransferase (239 aa).

CTP-binding positions include 7-10 and 80-86; these read FAGG and GETGQMS.

The protein belongs to the IspD/TarI cytidylyltransferase family. TarI subfamily.

It catalyses the reaction D-ribitol 5-phosphate + CTP + H(+) = CDP-L-ribitol + diphosphate. It participates in cell wall biogenesis; poly(ribitol phosphate) teichoic acid biosynthesis. In terms of biological role, catalyzes the transfer of the cytidylyl group of CTP to D-ribitol 5-phosphate. In Streptococcus agalactiae serotype Ia (strain ATCC 27591 / A909 / CDC SS700), this protein is Ribitol-5-phosphate cytidylyltransferase.